Here is a 314-residue protein sequence, read N- to C-terminus: Methionyl-tRNA formyltransferase (314 aa).

110 to 113 (SLLP) is a (6S)-5,6,7,8-tetrahydrofolate binding site.

Belongs to the Fmt family.

It carries out the reaction L-methionyl-tRNA(fMet) + (6R)-10-formyltetrahydrofolate = N-formyl-L-methionyl-tRNA(fMet) + (6S)-5,6,7,8-tetrahydrofolate + H(+). In terms of biological role, attaches a formyl group to the free amino group of methionyl-tRNA(fMet). The formyl group appears to play a dual role in the initiator identity of N-formylmethionyl-tRNA by promoting its recognition by IF2 and preventing the misappropriation of this tRNA by the elongation apparatus. The chain is Methionyl-tRNA formyltransferase from Lactobacillus acidophilus (strain ATCC 700396 / NCK56 / N2 / NCFM).